The chain runs to 469 residues: Tryptophan biosynthesis protein TrpCF (469 aa).

The tract at residues 1–271 (MSEQLSEHIS…LAVRKIVLGE (271 aa)) is indole-3-glycerol phosphate synthase. The segment at 272-469 (HKVCGLTHPD…QQVFQQLRNY (198 aa)) is N-(5'-phosphoribosyl)anthranilate isomerase.

The protein in the N-terminal section; belongs to the TrpC family. In the C-terminal section; belongs to the TrpF family. Monomer.

The catalysed reaction is N-(5-phospho-beta-D-ribosyl)anthranilate = 1-(2-carboxyphenylamino)-1-deoxy-D-ribulose 5-phosphate. It carries out the reaction 1-(2-carboxyphenylamino)-1-deoxy-D-ribulose 5-phosphate + H(+) = (1S,2R)-1-C-(indol-3-yl)glycerol 3-phosphate + CO2 + H2O. Its pathway is amino-acid biosynthesis; L-tryptophan biosynthesis; L-tryptophan from chorismate: step 3/5. The protein operates within amino-acid biosynthesis; L-tryptophan biosynthesis; L-tryptophan from chorismate: step 4/5. Its function is as follows. Bifunctional enzyme that catalyzes two sequential steps of tryptophan biosynthetic pathway. The first reaction is catalyzed by the isomerase, coded by the TrpF domain; the second reaction is catalyzed by the synthase, coded by the TrpC domain. This is Tryptophan biosynthesis protein TrpCF (trpCF) from Vibrio cholerae serotype O1 (strain ATCC 39315 / El Tor Inaba N16961).